Consider the following 231-residue polypeptide: NADH-ubiquinone oxidoreductase chain 4 (231 aa).

6 consecutive transmembrane segments (helical) span residues 1–21 (PIAG…YGII), 34–54 (MFLP…LTCL), 61–80 (SLIA…AIII), 84–106 (WGLT…LFCL), 128–148 (ILPM…ATPP), and 169–189 (TIIL…HMFL).

This sequence belongs to the complex I subunit 4 family.

The protein localises to the mitochondrion membrane. It carries out the reaction a ubiquinone + NADH + 5 H(+)(in) = a ubiquinol + NAD(+) + 4 H(+)(out). Functionally, core subunit of the mitochondrial membrane respiratory chain NADH dehydrogenase (Complex I) that is believed to belong to the minimal assembly required for catalysis. Complex I functions in the transfer of electrons from NADH to the respiratory chain. The immediate electron acceptor for the enzyme is believed to be ubiquinone. In Atropoides picadoi (Picado's pit viper), this protein is NADH-ubiquinone oxidoreductase chain 4 (MT-ND4).